We begin with the raw amino-acid sequence, 341 residues long: Basic membrane protein B (341 aa).

The N-terminal stretch at 1–14 (MRIVIFIFGILLTS) is a signal peptide. Cys15 carries N-palmitoyl cysteine lipidation. A lipid anchor (S-diacylglycerol cysteine) is attached at Cys15.

This sequence belongs to the BMP lipoprotein family. In terms of assembly, monomer.

Its subcellular location is the cell inner membrane. Its function is as follows. May be part of an ABC-type nucleoside uptake system involved in the purine salvage pathway. In Borreliella burgdorferi (strain ATCC 35210 / DSM 4680 / CIP 102532 / B31) (Borrelia burgdorferi), this protein is Basic membrane protein B (bmpB).